The sequence spans 537 residues: Proline--tRNA ligase (537 aa).

It belongs to the class-II aminoacyl-tRNA synthetase family. ProS type 3 subfamily. As to quaternary structure, homodimer.

It localises to the cytoplasm. The enzyme catalyses tRNA(Pro) + L-proline + ATP = L-prolyl-tRNA(Pro) + AMP + diphosphate. Catalyzes the attachment of proline to tRNA(Pro) in a two-step reaction: proline is first activated by ATP to form Pro-AMP and then transferred to the acceptor end of tRNA(Pro). This Nanoarchaeum equitans (strain Kin4-M) protein is Proline--tRNA ligase.